A 446-amino-acid polypeptide reads, in one-letter code: Glutamate-1-semialdehyde 2,1-aminomutase (446 aa).

Position 264 is an N6-(pyridoxal phosphate)lysine (Lys264).

This sequence belongs to the class-III pyridoxal-phosphate-dependent aminotransferase family. HemL subfamily. It depends on pyridoxal 5'-phosphate as a cofactor.

The protein resides in the cytoplasm. It catalyses the reaction (S)-4-amino-5-oxopentanoate = 5-aminolevulinate. Its pathway is porphyrin-containing compound metabolism; protoporphyrin-IX biosynthesis; 5-aminolevulinate from L-glutamyl-tRNA(Glu): step 2/2. This Natronomonas pharaonis (strain ATCC 35678 / DSM 2160 / CIP 103997 / JCM 8858 / NBRC 14720 / NCIMB 2260 / Gabara) (Halobacterium pharaonis) protein is Glutamate-1-semialdehyde 2,1-aminomutase.